A 421-amino-acid chain; its full sequence is Tyrosine--tRNA ligase (421 aa).

Residue Tyr38 participates in L-tyrosine binding. A 'HIGH' region motif is present at residues 43 to 52 (PTGDSLHIGH). L-tyrosine-binding residues include Tyr169 and Gln173. A 'KMSKS' region motif is present at residues 231 to 235 (KFGKS). ATP is bound at residue Lys234. Residues 353 to 419 (KNLVDFLVDT…GKKKYTLVHI (67 aa)) enclose the S4 RNA-binding domain.

It belongs to the class-I aminoacyl-tRNA synthetase family. TyrS type 1 subfamily. In terms of assembly, homodimer.

It is found in the cytoplasm. It carries out the reaction tRNA(Tyr) + L-tyrosine + ATP = L-tyrosyl-tRNA(Tyr) + AMP + diphosphate + H(+). Functionally, catalyzes the attachment of tyrosine to tRNA(Tyr) in a two-step reaction: tyrosine is first activated by ATP to form Tyr-AMP and then transferred to the acceptor end of tRNA(Tyr). This Lactobacillus delbrueckii subsp. bulgaricus (strain ATCC 11842 / DSM 20081 / BCRC 10696 / JCM 1002 / NBRC 13953 / NCIMB 11778 / NCTC 12712 / WDCM 00102 / Lb 14) protein is Tyrosine--tRNA ligase.